Here is a 422-residue protein sequence, read N- to C-terminus: UDP-N-acetylmuramoylalanine--D-glutamate ligase (422 aa).

102–108 is a binding site for ATP; the sequence is GTNGKTT.

Belongs to the MurCDEF family.

It is found in the cytoplasm. It catalyses the reaction UDP-N-acetyl-alpha-D-muramoyl-L-alanine + D-glutamate + ATP = UDP-N-acetyl-alpha-D-muramoyl-L-alanyl-D-glutamate + ADP + phosphate + H(+). It functions in the pathway cell wall biogenesis; peptidoglycan biosynthesis. Its function is as follows. Cell wall formation. Catalyzes the addition of glutamate to the nucleotide precursor UDP-N-acetylmuramoyl-L-alanine (UMA). The sequence is that of UDP-N-acetylmuramoylalanine--D-glutamate ligase from Helicobacter pylori (strain HPAG1).